Consider the following 143-residue polypeptide: Nucleoside diphosphate kinase (143 aa).

Positions 11, 59, 87, 93, 104, and 114 each coordinate ATP. His117 (pros-phosphohistidine intermediate) is an active-site residue.

Belongs to the NDK family. In terms of assembly, homotetramer. It depends on Mg(2+) as a cofactor.

It localises to the cytoplasm. It carries out the reaction dZDP + ATP = dZTP + ADP. The catalysed reaction is a 2'-deoxyribonucleoside 5'-diphosphate + ATP = a 2'-deoxyribonucleoside 5'-triphosphate + ADP. The enzyme catalyses a ribonucleoside 5'-diphosphate + ATP = a ribonucleoside 5'-triphosphate + ADP. It participates in purine metabolism. Major role in the synthesis of nucleoside triphosphates other than ATP. The ATP gamma phosphate is transferred to the NDP beta phosphate via a ping-pong mechanism, using a phosphorylated active-site intermediate. In terms of biological role, (Microbial infection) Catalyzes the phosphorylation of dZDP to dZTP, when the bacterium is infected by a phage that produces the substrate for the synthesis of dZTP (2- amino-2'-deoxyadenosine 5'-triphosphate), which is then used by the phage as a DNA polymerase substrate. The chain is Nucleoside diphosphate kinase from Acinetobacter baumannii (strain AB307-0294).